Reading from the N-terminus, the 305-residue chain is Mas-related G-protein coupled receptor member A2B (305 aa).

The Extracellular segment spans residues 1-17 (MDETLPGSINIRILIPK). Residues 18 to 38 (LMIIIFGLVGLMGNAIVFWLL) traverse the membrane as a helical segment. Residues 39 to 53 (GFHLRRNAFSVYILN) are Cytoplasmic-facing. The chain crosses the membrane as a helical span at residues 54 to 74 (LALADFLFLLSSIIASTLFLL). Topologically, residues 75–78 (KVSY) are extracellular. Residues 79-99 (LSIIFHLCFNTIMMVVYITGI) traverse the membrane as a helical segment. Over 100 to 132 (SMLSAISTECCLSVLCPTWYRCHRPVHTSTVMC) the chain is Cytoplasmic. Residues 133–153 (AVIWVLSLLICILNSYFCAVL) traverse the membrane as a helical segment. The Extracellular segment spans residues 154–167 (HTRYDNDNECLATN). Residues 168–188 (IFTASYMIFLLVVLCLSSLAL) form a helical membrane-spanning segment. Residues 189-207 (LARLFCGAGQMKLTRFHVT) lie on the Cytoplasmic side of the membrane. The helical transmembrane segment at 208-228 (ILLTLLVFLLCGLPFVIYCIL) threads the bilayer. Over 229–244 (LFKIKDDFHVLDVNFY) the chain is Extracellular. A helical membrane pass occupies residues 245–265 (LALEVLTAINSCANPIIYFFV). Residues 266–305 (GSFRHQLKHQTLKMVLQSALQDTPETAENMVEMSSNKAEP) are Cytoplasmic-facing.

Belongs to the G-protein coupled receptor 1 family. Mas subfamily. In terms of tissue distribution, expressed in a subset of sensory neurons that includes nociceptors. Expressed in the subclass of non-peptidergic sensory neurons that are IB4(+) and VR1(-).

It localises to the cell membrane. Its function is as follows. Orphan receptor. May be a receptor for RFamide-family neuropeptides such as NPFF and NPAF, which are analgesic in vivo. May regulate nociceptor function and/or development, including the sensation or modulation of pain. This Mus musculus (Mouse) protein is Mas-related G-protein coupled receptor member A2B.